Reading from the N-terminus, the 617-residue chain is MYPLRSKVTTVGRQASGARALWRATGSKESDFGKPIVAIANSFTQFVPGHVHLKNVGDIVADAVREAGGVPKEFNTIAVDDGIAMGHSGMLYSLPSREIISDSIEYMVNAHTADALVCISNCDKITPGMLNAALRLNIPTIFVSGGPMEAGKAVVVDGVAHAPTDLITAITASASDAVSDEGLTRVEESACPTCGSCSGMFTANSMNCLTEALGLALPGNGTTLATHSARRDLFEQAGRTIVDLCRRYYGEEDDAVLPRSIATKEAFSNAMALDMAMGGSTNTILHTLAAAQEGEVDFTLEDINEISYRVPCLSKVAPNGTYHIEDVHRAGGIPAILGELRRAGHLNLKVHTALYDNAEEWLDDWDIRGGKATEAALELFHAAPGGVRTTEPFSQSNRWDELDTDAANGCIHDAERAFSSDGGLVVLRGNLAPNGAIVKAAGVEEELWTFTGPARVVESQEEAVSIILKKEVQPGDVIVIRYEGPAGGPGMQEMLHPTSFLKGSGLGKACALITDGRFSGGTSGLSIGHISPEAAHGGLIGLVENGDPITINIRERQLTLDVDEEVLERRRATEEQREKPWTPKERNRPVTKALRAYANMATSADRGAVRVVDGYVN.

Asp-81 lines the Mg(2+) pocket. Cys-122 provides a ligand contact to [2Fe-2S] cluster. Residues Asp-123 and Lys-124 each contribute to the Mg(2+) site. Lys-124 carries the post-translational modification N6-carboxylysine. A [2Fe-2S] cluster-binding site is contributed by Cys-197. Glu-493 provides a ligand contact to Mg(2+). Ser-519 functions as the Proton acceptor in the catalytic mechanism.

This sequence belongs to the IlvD/Edd family. Homodimer. The cofactor is [2Fe-2S] cluster. Mg(2+) serves as cofactor.

The catalysed reaction is (2R)-2,3-dihydroxy-3-methylbutanoate = 3-methyl-2-oxobutanoate + H2O. The enzyme catalyses (2R,3R)-2,3-dihydroxy-3-methylpentanoate = (S)-3-methyl-2-oxopentanoate + H2O. Its pathway is amino-acid biosynthesis; L-isoleucine biosynthesis; L-isoleucine from 2-oxobutanoate: step 3/4. The protein operates within amino-acid biosynthesis; L-valine biosynthesis; L-valine from pyruvate: step 3/4. In terms of biological role, functions in the biosynthesis of branched-chain amino acids. Catalyzes the dehydration of (2R,3R)-2,3-dihydroxy-3-methylpentanoate (2,3-dihydroxy-3-methylvalerate) into 2-oxo-3-methylpentanoate (2-oxo-3-methylvalerate) and of (2R)-2,3-dihydroxy-3-methylbutanoate (2,3-dihydroxyisovalerate) into 2-oxo-3-methylbutanoate (2-oxoisovalerate), the penultimate precursor to L-isoleucine and L-valine, respectively. This Corynebacterium aurimucosum (strain ATCC 700975 / DSM 44827 / CIP 107346 / CN-1) (Corynebacterium nigricans) protein is Dihydroxy-acid dehydratase.